The chain runs to 464 residues: ATP synthase subunit beta (464 aa).

Glycine 152–threonine 159 serves as a coordination point for ATP.

It belongs to the ATPase alpha/beta chains family. F-type ATPases have 2 components, CF(1) - the catalytic core - and CF(0) - the membrane proton channel. CF(1) has five subunits: alpha(3), beta(3), gamma(1), delta(1), epsilon(1). CF(0) has three main subunits: a(1), b(2) and c(9-12). The alpha and beta chains form an alternating ring which encloses part of the gamma chain. CF(1) is attached to CF(0) by a central stalk formed by the gamma and epsilon chains, while a peripheral stalk is formed by the delta and b chains.

The protein localises to the cell membrane. It catalyses the reaction ATP + H2O + 4 H(+)(in) = ADP + phosphate + 5 H(+)(out). Functionally, produces ATP from ADP in the presence of a proton gradient across the membrane. The catalytic sites are hosted primarily by the beta subunits. The chain is ATP synthase subunit beta from Ureaplasma urealyticum serovar 10 (strain ATCC 33699 / Western).